The chain runs to 172 residues: 3-phenylpropionate/cinnamic acid dioxygenase subunit beta (172 aa).

Belongs to the bacterial ring-hydroxylating dioxygenase beta subunit family. In terms of assembly, this dioxygenase system consists of four proteins: the two subunits of the hydroxylase component (HcaE and HcaF), a ferredoxin (HcaC) and a ferredoxin reductase (HcaD).

It carries out the reaction 3-phenylpropanoate + NADH + O2 + H(+) = 3-(cis-5,6-dihydroxycyclohexa-1,3-dien-1-yl)propanoate + NAD(+). It catalyses the reaction (E)-cinnamate + NADH + O2 + H(+) = (2E)-3-(cis-5,6-dihydroxycyclohexa-1,3-dien-1-yl)prop-2-enoate + NAD(+). It functions in the pathway aromatic compound metabolism; 3-phenylpropanoate degradation. Part of the multicomponent 3-phenylpropionate dioxygenase. Converts 3-phenylpropionic acid (PP) and cinnamic acid (CI) into 3-phenylpropionate-dihydrodiol (PP-dihydrodiol) and cinnamic acid-dihydrodiol (CI-dihydrodiol), respectively. In Shigella sonnei (strain Ss046), this protein is 3-phenylpropionate/cinnamic acid dioxygenase subunit beta.